The sequence spans 122 residues: Ribosomal silencing factor RsfS (122 aa).

Belongs to the Iojap/RsfS family. Interacts with ribosomal protein uL14 (rplN).

The protein resides in the cytoplasm. In terms of biological role, functions as a ribosomal silencing factor. Interacts with ribosomal protein uL14 (rplN), blocking formation of intersubunit bridge B8. Prevents association of the 30S and 50S ribosomal subunits and the formation of functional ribosomes, thus repressing translation. This Chromobacterium violaceum (strain ATCC 12472 / DSM 30191 / JCM 1249 / CCUG 213 / NBRC 12614 / NCIMB 9131 / NCTC 9757 / MK) protein is Ribosomal silencing factor RsfS.